The primary structure comprises 286 residues: Leukocyte cell-derived chemotaxin 1 (286 aa).

A helical transmembrane segment spans residues 29 to 49 (LVAFIAGAALLLFGGVGAFYL). The BRICHOS domain maps to 75 to 157 (DSAEGTIVEV…FCADLPIYWH (83 aa)). Cysteines 102 and 149 form a disulfide. The propeptide occupies 166–169 (RKRR). Positions 166-176 (RKRRSATRMRR) are enriched in basic residues. The interval 166-220 (RKRRSATRMRRQTSAGVNRQPARRRNSTASARDERPTGPEYNPENPYHQNQGSEG) is disordered. An N-linked (GlcNAc...) asparagine glycan is attached at asparagine 191. Intrachain disulfides connect cysteine 234/cysteine 238, cysteine 235/cysteine 275, cysteine 245/cysteine 269, and cysteine 249/cysteine 265.

This sequence belongs to the chondromodulin-1 family. After cleavage, the post-translationally modified ChM-I is secreted as a glycoprotein.

It is found in the secreted. It localises to the extracellular space. Its subcellular location is the extracellular matrix. The protein resides in the endomembrane system. Bifunctional growth regulator. May contribute to the rapid growth of cartilage and vascular invasion prior to the replacement of cartilage by bone during endochondral bone development. Plays a role as antiangiogenic factor in cardiac valves to suppress neovascularization. The sequence is that of Leukocyte cell-derived chemotaxin 1 from Danio rerio (Zebrafish).